The following is a 229-amino-acid chain: ATP synthase subunit a (229 aa).

The next 6 membrane-spanning stretches (helical) occupy residues 16–36 (YAHVATLGIATVAAVGIGAAA), 81–101 (YIPFFASVFFFILFNNLLGMI), 110–130 (NMNTTFGFGVLMFLFYNFQGV), 142–162 (FMGPVIFLAPLMFVIEIVSHI), 175–195 (VMMGDHTVLSVFLDLVPIGVP), and 196–216 (IPFYVMGLFVCFVQAFVFTLL).

Belongs to the ATPase A chain family. F-type ATPases have 2 components, CF(1) - the catalytic core - and CF(0) - the membrane proton channel. CF(1) has five subunits: alpha(3), beta(3), gamma(1), delta(1), epsilon(1). CF(0) has three main subunits: a(1), b(2) and c(9-12). The alpha and beta chains form an alternating ring which encloses part of the gamma chain. CF(1) is attached to CF(0) by a central stalk formed by the gamma and epsilon chains, while a peripheral stalk is formed by the delta and b chains.

The protein localises to the cell inner membrane. Functionally, key component of the proton channel; it plays a direct role in the translocation of protons across the membrane. This is ATP synthase subunit a from Bdellovibrio bacteriovorus (strain ATCC 15356 / DSM 50701 / NCIMB 9529 / HD100).